The chain runs to 413 residues: ATP-dependent (S)-NAD(P)H-hydrate dehydratase (413 aa).

Positions 98-402 (NLNHFLSYVP…KSVPNALVWG (305 aa)) constitute a YjeF C-terminal domain. Residues G199 and 252–258 (NFVEYRA) each bind (6S)-NADPHX. ATP-binding positions include 292-296 (KGQED) and 311-320 (GMPRRCGGQG). D321 provides a ligand contact to (6S)-NADPHX.

This sequence belongs to the NnrD/CARKD family. Mg(2+) is required as a cofactor.

It catalyses the reaction (6S)-NADHX + ATP = ADP + phosphate + NADH + H(+). It carries out the reaction (6S)-NADPHX + ATP = ADP + phosphate + NADPH + H(+). Catalyzes the dehydration of the S-form of NAD(P)HX at the expense of ATP, which is converted to ADP. Together with NAD(P)HX epimerase, which catalyzes the epimerization of the S- and R-forms, the enzyme allows the repair of both epimers of NAD(P)HX, a damaged form of NAD(P)H that is a result of enzymatic or heat-dependent hydration. The protein is ATP-dependent (S)-NAD(P)H-hydrate dehydratase of Heterostelium pallidum (strain ATCC 26659 / Pp 5 / PN500) (Cellular slime mold).